The following is a 214-amino-acid chain: Octanoyltransferase (214 aa).

One can recognise a BPL/LPL catalytic domain in the interval 34-214; the sequence is GLQKELVWLL…KFNEIFSSFN (181 aa). Residues 73–80, 145–147, and 158–160 contribute to the substrate site; these read RGGKYTYH, AFG, and GVS. Cysteine 176 functions as the Acyl-thioester intermediate in the catalytic mechanism.

Belongs to the LipB family.

It is found in the cytoplasm. It carries out the reaction octanoyl-[ACP] + L-lysyl-[protein] = N(6)-octanoyl-L-lysyl-[protein] + holo-[ACP] + H(+). Its pathway is protein modification; protein lipoylation via endogenous pathway; protein N(6)-(lipoyl)lysine from octanoyl-[acyl-carrier-protein]: step 1/2. Functionally, catalyzes the transfer of endogenously produced octanoic acid from octanoyl-acyl-carrier-protein onto the lipoyl domains of lipoate-dependent enzymes. Lipoyl-ACP can also act as a substrate although octanoyl-ACP is likely to be the physiological substrate. The sequence is that of Octanoyltransferase from Ehrlichia canis (strain Jake).